The primary structure comprises 95 residues: Pyruvate dehydrogenase inhibitor (95 aa).

It belongs to the HesB/IscA family. As to quaternary structure, interacts with the E1 module of pyruvate dehydrogenase (PdhA-PdhB).

Functionally, acts as an inhibitor of the pyruvate dehydrogenase. Overexpression does not affect growth with glucose as the main carbon source, but it leads to a dramatic growth defect when cells are grown with pyruvate as the sole carbon source. The protein is Pyruvate dehydrogenase inhibitor of Bacillus subtilis (strain 168).